A 95-amino-acid chain; its full sequence is Signal recognition particle 19 kDa protein (95 aa).

The protein belongs to the SRP19 family. In terms of assembly, part of the signal recognition particle protein translocation system, which is composed of SRP and FtsY. Archaeal SRP consists of a 7S RNA molecule of 300 nucleotides and two protein subunits: SRP54 and SRP19.

It is found in the cytoplasm. Functionally, involved in targeting and insertion of nascent membrane proteins into the cytoplasmic membrane. Binds directly to 7S RNA and mediates binding of the 54 kDa subunit of the SRP. This is Signal recognition particle 19 kDa protein from Desulfurococcus amylolyticus (strain DSM 18924 / JCM 16383 / VKM B-2413 / 1221n) (Desulfurococcus kamchatkensis).